We begin with the raw amino-acid sequence, 238 residues long: MIDEPASRTALVLFSGGQDSATCLAWALQRFARVETLGFDYGQRHAIELDCRDSLLAGMASLRPDWAKKLGETHTLAIPTLAEISDTALTRNVAIEVSESGLPNTFVPGRNLVFLTFAAALAYRRGVTDIVGGMCETDYSGYPDCRDETIRALRIALNLGMVRQFELHTPLMRLDKGATWSLAHELGGTGLVDLIREHSHTCYLGERGARHAWGYGCGECPACGLRAKGWREYLARIA.

Residue 14–24 (FSGGQDSATCL) participates in ATP binding. Zn(2+) is bound by residues C202, C217, C220, and C223.

The protein belongs to the QueC family. The cofactor is Zn(2+).

The enzyme catalyses 7-carboxy-7-deazaguanine + NH4(+) + ATP = 7-cyano-7-deazaguanine + ADP + phosphate + H2O + H(+). It functions in the pathway purine metabolism; 7-cyano-7-deazaguanine biosynthesis. Catalyzes the ATP-dependent conversion of 7-carboxy-7-deazaguanine (CDG) to 7-cyano-7-deazaguanine (preQ(0)). In Nitrobacter winogradskyi (strain ATCC 25391 / DSM 10237 / CIP 104748 / NCIMB 11846 / Nb-255), this protein is 7-cyano-7-deazaguanine synthase.